The sequence spans 79 residues: MSVKLRLARMGNKKRAFYRIVAVNSAARRDGRPLEFLGFYNPMVNPAEVKIDTAKVQKWLDQGAEPTDTVRTLLKKQAG.

The protein belongs to the bacterial ribosomal protein bS16 family.

In Nitratidesulfovibrio vulgaris (strain DSM 19637 / Miyazaki F) (Desulfovibrio vulgaris), this protein is Small ribosomal subunit protein bS16.